The primary structure comprises 188 residues: HGPRTase-like protein 1 (188 aa).

This sequence belongs to the purine/pyrimidine phosphoribosyltransferase family. Archaeal HPRT subfamily.

May catalyze a purine salvage reaction, the substrate is unknown. This is HGPRTase-like protein 1 from Haloquadratum walsbyi (strain DSM 16854 / JCM 12705 / C23).